A 198-amino-acid chain; its full sequence is Small ribosomal subunit protein uS4c (198 aa).

An S4 RNA-binding domain is found at 85-145 (LRLDATIFRL…PKKFTIILIC (61 aa)).

It belongs to the universal ribosomal protein uS4 family. In terms of assembly, part of the 30S ribosomal subunit.

It localises to the plastid. The protein resides in the apicoplast. In terms of biological role, one of the primary rRNA binding proteins, it binds directly to 16S rRNA where it nucleates assembly of the body of the 30S subunit. This Toxoplasma gondii protein is Small ribosomal subunit protein uS4c (rps4).